The chain runs to 423 residues: POU domain, class 5, transcription factor 1.3 (423 aa).

Residues 85–211 form a disordered region; it reads GALSSGDPSP…GSGNEEDGTT (127 aa). Over residues 94–110 the composition is skewed to basic and acidic residues; sequence PEGRNEEDHGSISEERS. Polar residues-rich tracts occupy residues 111-120, 156-173, and 194-203; these read SGTPSPNSPM, PQQS…GASN, and PSPNNASFGS. Residues 207–281 form the POU-specific domain; the sequence is EDGTTLEEME…LLEQWLGEAE (75 aa). The homeobox DNA-binding region spans 301 to 360; sequence KRKMRTCFDSVLKGRLEGHFMCNQKPGARELAEIAKELGLEKDVVRVWFCNRRQKEKSKS.

The protein belongs to the POU transcription factor family. Class-5 subfamily. Interacts with the transcription factors tcf7l1/tcf3 and vegt.

The protein resides in the nucleus. Its function is as follows. Transcription factor that binds to the octamer motif (5'-ATTTGCAT-3'). Antagonizes the activity of nodal/activin signaling during gastrulation to suppress mesendoderm formation. Acts maternally to inhibit vegt and beta-catenin-activated gene transcription, probably by forming a transcriptional repression complex on the promoters of target genes. Binds to an octamer motif in interspersed RNA. The sequence is that of POU domain, class 5, transcription factor 1.3 (pou5f1.3) from Xenopus tropicalis (Western clawed frog).